The sequence spans 571 residues: uncharacterized protein (571 aa).

The next 5 membrane-spanning stretches (helical) occupy residues 10–29, 36–55, 65–87, 96–118, and 166–188; these read VRLHPELALFAAIVFGHFIG, VSLGTVVGTLIAGMILGLLF, WAFFDLFLFAVGYSAGPQFFASL, ALAVVVSCTGLAAAIAMVALFRF, and ATTYIFGEVGLILFVTVVAPRLL. Residues 294–378 enclose the RCK C-terminal domain; sequence TEVDDQELLS…IATAARNLGF (85 aa). 6 consecutive transmembrane segments (helical) span residues 388–406, 411–433, 446–465, 480–502, 509–531, and 546–568; these read LVYLAGGVVVGILFGLLQV, VPLGLGTSGGVLVVGLVAGWLYS, LRLLSDVGLIVFIAAIGLAA, LFAKLVGAGVVVTLAGPIAGLLL, LPPVALLPGIAGAQTTVATLNAL, and VPFAVSNVLITLWGPVIVACAVA.

This sequence belongs to the AAE transporter (TC 2.A.81) family.

The protein localises to the cell membrane. This is an uncharacterized protein from Bordetella parapertussis (strain 12822 / ATCC BAA-587 / NCTC 13253).